Reading from the N-terminus, the 669-residue chain is UvrABC system protein B (669 aa).

In terms of domain architecture, Helicase ATP-binding spans 27-414 (ESLQGEHKFQ…EARVIEQVIR (388 aa)). ATP is bound at residue 40–47 (GATGTGKT). Positions 93-116 (YYDYYQPEAYIPVTDTYIEKTASI) match the Beta-hairpin motif. The Helicase C-terminal domain occupies 431–597 (QVDDLYGEIQ…PINKRANNAI (167 aa)). Residues 628–663 (PDLIQQLEEKMQEAAKKQEFEVAAIYRDRIQHLRDR) form the UVR domain.

Belongs to the UvrB family. In terms of assembly, forms a heterotetramer with UvrA during the search for lesions. Interacts with UvrC in an incision complex.

It is found in the cytoplasm. Functionally, the UvrABC repair system catalyzes the recognition and processing of DNA lesions. A damage recognition complex composed of 2 UvrA and 2 UvrB subunits scans DNA for abnormalities. Upon binding of the UvrA(2)B(2) complex to a putative damaged site, the DNA wraps around one UvrB monomer. DNA wrap is dependent on ATP binding by UvrB and probably causes local melting of the DNA helix, facilitating insertion of UvrB beta-hairpin between the DNA strands. Then UvrB probes one DNA strand for the presence of a lesion. If a lesion is found the UvrA subunits dissociate and the UvrB-DNA preincision complex is formed. This complex is subsequently bound by UvrC and the second UvrB is released. If no lesion is found, the DNA wraps around the other UvrB subunit that will check the other stand for damage. The protein is UvrABC system protein B of Synechocystis sp. (strain ATCC 27184 / PCC 6803 / Kazusa).